Consider the following 549-residue polypeptide: Oxygen-dependent choline dehydrogenase (549 aa).

4 to 33 (DFVIIGSGSAGSAMAYRLSEDGRYSVIVIE) serves as a coordination point for FAD. The active-site Proton acceptor is the H465.

Belongs to the GMC oxidoreductase family. Requires FAD as cofactor.

The catalysed reaction is choline + A = betaine aldehyde + AH2. The enzyme catalyses betaine aldehyde + NAD(+) + H2O = glycine betaine + NADH + 2 H(+). Its pathway is amine and polyamine biosynthesis; betaine biosynthesis via choline pathway; betaine aldehyde from choline (cytochrome c reductase route): step 1/1. Functionally, involved in the biosynthesis of the osmoprotectant glycine betaine. Catalyzes the oxidation of choline to betaine aldehyde and betaine aldehyde to glycine betaine at the same rate. In Brucella canis (strain ATCC 23365 / NCTC 10854 / RM-666), this protein is Oxygen-dependent choline dehydrogenase.